Consider the following 342-residue polypeptide: Tetraacyldisaccharide 4'-kinase (342 aa).

56 to 63 (TAGGAGKT) serves as a coordination point for ATP.

This sequence belongs to the LpxK family.

The enzyme catalyses a lipid A disaccharide + ATP = a lipid IVA + ADP + H(+). It functions in the pathway glycolipid biosynthesis; lipid IV(A) biosynthesis; lipid IV(A) from (3R)-3-hydroxytetradecanoyl-[acyl-carrier-protein] and UDP-N-acetyl-alpha-D-glucosamine: step 6/6. Transfers the gamma-phosphate of ATP to the 4'-position of a tetraacyldisaccharide 1-phosphate intermediate (termed DS-1-P) to form tetraacyldisaccharide 1,4'-bis-phosphate (lipid IVA). This chain is Tetraacyldisaccharide 4'-kinase, found in Parvibaculum lavamentivorans (strain DS-1 / DSM 13023 / NCIMB 13966).